The sequence spans 433 residues: Enolase (433 aa).

Gln-167 is a binding site for (2R)-2-phosphoglycerate. Catalysis depends on Glu-209, which acts as the Proton donor. Asp-246, Glu-291, and Asp-318 together coordinate Mg(2+). 4 residues coordinate (2R)-2-phosphoglycerate: Lys-343, Arg-372, Ser-373, and Lys-394. Residue Lys-343 is the Proton acceptor of the active site.

The protein belongs to the enolase family. In terms of assembly, component of the RNA degradosome, a multiprotein complex involved in RNA processing and mRNA degradation. The cofactor is Mg(2+).

It is found in the cytoplasm. It localises to the secreted. The protein resides in the cell surface. It catalyses the reaction (2R)-2-phosphoglycerate = phosphoenolpyruvate + H2O. Its pathway is carbohydrate degradation; glycolysis; pyruvate from D-glyceraldehyde 3-phosphate: step 4/5. Functionally, catalyzes the reversible conversion of 2-phosphoglycerate (2-PG) into phosphoenolpyruvate (PEP). It is essential for the degradation of carbohydrates via glycolysis. The chain is Enolase from Shewanella piezotolerans (strain WP3 / JCM 13877).